The primary structure comprises 222 residues: Germin-like protein subfamily 1 member 20 (222 aa).

Residues 1–22 (MRVSQSLVPFAIIALVLSFVNA) form the signal peptide. A disulfide bridge connects residues Cys32 and Cys48. The Cupin type-1 domain maps to 62–213 (SGLNVPGNTN…AFQLDASVVK (152 aa)). Asn77 carries N-linked (GlcNAc...) asparagine glycosylation. Mn(2+)-binding residues include His110, His112, Glu117, and His159.

The protein belongs to the germin family. Oligomer (believed to be a pentamer but probably hexamer). As to expression, expressed in stems and developing embryos.

Its subcellular location is the secreted. It is found in the extracellular space. The protein localises to the apoplast. In terms of biological role, may play a role in plant defense. Probably has no oxalate oxidase activity even if the active site is conserved. In Arabidopsis thaliana (Mouse-ear cress), this protein is Germin-like protein subfamily 1 member 20 (GLP5A).